We begin with the raw amino-acid sequence, 154 residues long: MGNRCARTSCCRKLWSCICCCSNNNNNSYGQTRSQHGSKGKVHPVSRIEKWEEKITEANNHGKILVVNFSAPWCVPCKKIEPVFRDLASRYPSMIFVTVDVEELAEFSNEWNVEATPTVVFLKDGRQMDKLVGAETSELQKKTAAAADLFLRKP.

The Thioredoxin domain maps to 24 to 148 (NNNNSYGQTR…LQKKTAAAAD (125 aa)). Catalysis depends on nucleophile residues C74 and C77. The cysteines at positions 74 and 77 are disulfide-linked.

This sequence belongs to the thioredoxin family.

The protein localises to the cytoplasm. In terms of biological role, probable thiol-disulfide oxidoreductase that may be involved in the redox regulation of a number of cytosolic enzymes. This chain is Putative thioredoxin H10, found in Arabidopsis thaliana (Mouse-ear cress).